The chain runs to 419 residues: MINRFSIEKVKGLEIVDSRGNPTIRVFIRTSDGVESFGDAPAGASKGTREAVEVRDENGLTVKRAVDIVNYIIDPALHGIDVREQGIIDKLLKDIDSTENKSKLGGNTIIATSIAALKTASKALGLEVFKYISGPRLPKIPIPLLNIINGGLHAGNKLKIQEFIIVPIKFNTFKEALFAAIDVYRTLKGLITERYGKIYTAVGDEGGFSPPLEDTREALDLIYTSINNAGYEGKIYMGMDAAGSDFYDSKKEKYIIDGRELDPNQLLEFYLDLVKQYPIVYLEDPFEENSFDMFSQLQNKLSSTIITGDDLYTTNIKYLKIGIEKRSTKGVIVKPNQVGTISETFEFTNLARRNSMKLITSHRSGETEDNFIADFAVGIESDFIKVGAPARGERTSKYNKLLEIENKFGLEYEGKYFYL.

Glutamine 161 contacts (2R)-2-phosphoglycerate. Glutamate 205 serves as the catalytic Proton donor. Residues aspartate 240, glutamate 283, and aspartate 309 each contribute to the Mg(2+) site. (2R)-2-phosphoglycerate contacts are provided by lysine 334, arginine 363, serine 364, and lysine 385. Lysine 334 functions as the Proton acceptor in the catalytic mechanism.

This sequence belongs to the enolase family. Mg(2+) is required as a cofactor.

The protein localises to the cytoplasm. It localises to the secreted. The protein resides in the cell surface. The enzyme catalyses (2R)-2-phosphoglycerate = phosphoenolpyruvate + H2O. The protein operates within carbohydrate degradation; glycolysis; pyruvate from D-glyceraldehyde 3-phosphate: step 4/5. Functionally, catalyzes the reversible conversion of 2-phosphoglycerate (2-PG) into phosphoenolpyruvate (PEP). It is essential for the degradation of carbohydrates via glycolysis. This chain is Enolase, found in Saccharolobus solfataricus (strain ATCC 35092 / DSM 1617 / JCM 11322 / P2) (Sulfolobus solfataricus).